The primary structure comprises 260 residues: MLHIADKTFDSHLIMGTGGATSQALLEESLVASGTQLTTVAMRRHQATTSSGESIFAMLRRLEIALLPNTAGCRTARDAVLTAQLAREALDTNWVKVEVIADEHTLLPDTVELLDACELLVHDGFTVLAYTSDDPITASRLEDCGVAAVMPLGSPIGTGLGILNPHNIELICSRASVPVILDAGVGTASDATLAMELGCDGVLLASAINRAQNPVAMAESMFHAVEAGRLAAQAGRIPQRQHAVASSSFEGLASWAEQVL.

The active-site Schiff-base intermediate with DXP is K96. 1-deoxy-D-xylulose 5-phosphate-binding positions include G157, 183–184 (AG), and 205–206 (AS).

The protein belongs to the ThiG family. Homotetramer. Forms heterodimers with either ThiH or ThiS.

The protein resides in the cytoplasm. The catalysed reaction is [ThiS sulfur-carrier protein]-C-terminal-Gly-aminoethanethioate + 2-iminoacetate + 1-deoxy-D-xylulose 5-phosphate = [ThiS sulfur-carrier protein]-C-terminal Gly-Gly + 2-[(2R,5Z)-2-carboxy-4-methylthiazol-5(2H)-ylidene]ethyl phosphate + 2 H2O + H(+). It functions in the pathway cofactor biosynthesis; thiamine diphosphate biosynthesis. Catalyzes the rearrangement of 1-deoxy-D-xylulose 5-phosphate (DXP) to produce the thiazole phosphate moiety of thiamine. Sulfur is provided by the thiocarboxylate moiety of the carrier protein ThiS. In vitro, sulfur can be provided by H(2)S. This is Thiazole synthase from Corynebacterium glutamicum (strain ATCC 13032 / DSM 20300 / JCM 1318 / BCRC 11384 / CCUG 27702 / LMG 3730 / NBRC 12168 / NCIMB 10025 / NRRL B-2784 / 534).